A 588-amino-acid chain; its full sequence is Methylcrotonoyl-CoA carboxylase beta chain, mitochondrial (588 aa).

Residues 72–329 enclose the CoA carboxyltransferase N-terminal domain; sequence MNSTLKQLKE…KKQPSPVITE (258 aa). Residues 72 to 570 are carboxyltransferase; the sequence is MNSTLKQLKE…RKVIALSLSA (499 aa). The CoA carboxyltransferase C-terminal domain occupies 329 to 570; it reads ETEEPLYPTS…RKVIALSLSA (242 aa). The segment at 366 to 395 is acyl-CoA binding; it reads RFDEFKELYGTTLICGFARVHGMPVGIIAN.

This sequence belongs to the AccD/PCCB family. In terms of assembly, probably a dodecamer composed of six biotin-containing alpha subunits and six beta subunits.

The protein resides in the mitochondrion matrix. The enzyme catalyses 3-methylbut-2-enoyl-CoA + hydrogencarbonate + ATP = 3-methyl-(2E)-glutaconyl-CoA + ADP + phosphate + H(+). It functions in the pathway amino-acid degradation; L-leucine degradation; (S)-3-hydroxy-3-methylglutaryl-CoA from 3-isovaleryl-CoA: step 2/3. Functionally, carboxyltransferase subunit of the 3-methylcrotonyl-CoA carboxylase, an enzyme that catalyzes the conversion of 3-methylcrotonyl-CoA to 3-methylglutaconyl-CoA, a critical step for leucine and isovaleric acid catabolism. The polypeptide is Methylcrotonoyl-CoA carboxylase beta chain, mitochondrial (mccb) (Dictyostelium discoideum (Social amoeba)).